Here is a 312-residue protein sequence, read N- to C-terminus: Glyoxylate/hydroxypyruvate reductase A (312 aa).

Residue R227 is part of the active site. H275 serves as the catalytic Proton donor.

Belongs to the D-isomer specific 2-hydroxyacid dehydrogenase family. GhrA subfamily.

It localises to the cytoplasm. It carries out the reaction glycolate + NADP(+) = glyoxylate + NADPH + H(+). The catalysed reaction is (R)-glycerate + NAD(+) = 3-hydroxypyruvate + NADH + H(+). It catalyses the reaction (R)-glycerate + NADP(+) = 3-hydroxypyruvate + NADPH + H(+). Its function is as follows. Catalyzes the NADPH-dependent reduction of glyoxylate and hydroxypyruvate into glycolate and glycerate, respectively. This is Glyoxylate/hydroxypyruvate reductase A from Enterobacter sp. (strain 638).